The following is a 100-amino-acid chain: Urease subunit gamma (100 aa).

This sequence belongs to the urease gamma subunit family. As to quaternary structure, probable heterotrimer of UreA (gamma), UreB (beta) and UreC (alpha) subunits. Three heterotrimers associate to form the active enzyme. The trimeric urease interacts with an accessory complex composed of UreD, UreF and UreG, which is required for the assembly of the nickel containing metallocenter of UreC. The UreE protein may also play a direct role in nickel transfer to the urease apoprotein.

It localises to the cytoplasm. The catalysed reaction is urea + 2 H2O + H(+) = hydrogencarbonate + 2 NH4(+). Its pathway is nitrogen metabolism; urea degradation; CO(2) and NH(3) from urea (urease route): step 1/1. This Proteus mirabilis (strain HI4320) protein is Urease subunit gamma.